The sequence spans 500 residues: NAD(P)H-quinone oxidoreductase chain 4, chloroplastic (500 aa).

A run of 15 helical transmembrane segments spans residues 4–24 (FPWL…IFFL), 35–55 (YTIF…CYHF), 87–107 (IGPI…AWPV), 113–130 (LFNF…GLFS), 134–154 (LLLF…LLSM), 167–187 (FILY…GIGL), 211–231 (IIFY…IPLH), 242–262 (HYST…YGLV), 272–292 (AHSI…IYAA), 305–325 (IAYS…SITD), 330–350 (GALL…FLAG), 364–384 (MGGI…FSMA), 386–406 (LALP…GIIT), 416–436 (ILIT…SLSM), and 463–483 (FLSI…DFIF).

This sequence belongs to the complex I subunit 4 family.

The protein localises to the plastid. The protein resides in the chloroplast thylakoid membrane. The enzyme catalyses a plastoquinone + NADH + (n+1) H(+)(in) = a plastoquinol + NAD(+) + n H(+)(out). It catalyses the reaction a plastoquinone + NADPH + (n+1) H(+)(in) = a plastoquinol + NADP(+) + n H(+)(out). The chain is NAD(P)H-quinone oxidoreductase chain 4, chloroplastic from Coffea arabica (Arabian coffee).